We begin with the raw amino-acid sequence, 473 residues long: Aspartyl/glutamyl-tRNA(Asn/Gln) amidotransferase subunit B (473 aa).

Belongs to the GatB/GatE family. GatB subfamily. As to quaternary structure, heterotrimer of A, B and C subunits.

It carries out the reaction L-glutamyl-tRNA(Gln) + L-glutamine + ATP + H2O = L-glutaminyl-tRNA(Gln) + L-glutamate + ADP + phosphate + H(+). The catalysed reaction is L-aspartyl-tRNA(Asn) + L-glutamine + ATP + H2O = L-asparaginyl-tRNA(Asn) + L-glutamate + ADP + phosphate + 2 H(+). Allows the formation of correctly charged Asn-tRNA(Asn) or Gln-tRNA(Gln) through the transamidation of misacylated Asp-tRNA(Asn) or Glu-tRNA(Gln) in organisms which lack either or both of asparaginyl-tRNA or glutaminyl-tRNA synthetases. The reaction takes place in the presence of glutamine and ATP through an activated phospho-Asp-tRNA(Asn) or phospho-Glu-tRNA(Gln). This Francisella tularensis subsp. tularensis (strain FSC 198) protein is Aspartyl/glutamyl-tRNA(Asn/Gln) amidotransferase subunit B.